The following is a 256-amino-acid chain: DNA polymerase sliding clamp 2 (256 aa).

It belongs to the PCNA family. Homotrimer. The subunits circularize to form a toroid; DNA passes through its center. Replication factor C (RFC) is required to load the toroid on the DNA.

In terms of biological role, sliding clamp subunit that acts as a moving platform for DNA processing. Responsible for tethering the catalytic subunit of DNA polymerase and other proteins to DNA during high-speed replication. The sequence is that of DNA polymerase sliding clamp 2 from Pyrobaculum aerophilum (strain ATCC 51768 / DSM 7523 / JCM 9630 / CIP 104966 / NBRC 100827 / IM2).